The following is a 490-amino-acid chain: Betaine aldehyde dehydrogenase (490 aa).

Position 93 (D93) interacts with K(+). 150–152 (GAW) contributes to the NAD(+) binding site. K162 (charge relay system) is an active-site residue. 176–179 (KPSE) contributes to the NAD(+) binding site. V180 provides a ligand contact to K(+). 230–233 (GIAS) serves as a coordination point for NAD(+). Residue L246 coordinates K(+). E252 serves as the catalytic Proton acceptor. NAD(+) is bound by residues G254, C286, and E387. The Nucleophile role is filled by C286. C286 is modified (cysteine sulfenic acid (-SOH)). K(+)-binding residues include K457 and G460. E464 functions as the Charge relay system in the catalytic mechanism.

This sequence belongs to the aldehyde dehydrogenase family. As to quaternary structure, dimer of dimers. Requires K(+) as cofactor.

It carries out the reaction betaine aldehyde + NAD(+) + H2O = glycine betaine + NADH + 2 H(+). It participates in amine and polyamine biosynthesis; betaine biosynthesis via choline pathway; betaine from betaine aldehyde: step 1/1. Its function is as follows. Involved in the biosynthesis of the osmoprotectant glycine betaine. Catalyzes the irreversible oxidation of betaine aldehyde to the corresponding acid. This is Betaine aldehyde dehydrogenase from Yersinia pseudotuberculosis serotype I (strain IP32953).